We begin with the raw amino-acid sequence, 285 residues long: Phosphoribosylaminoimidazole-succinocarboxamide synthase (285 aa).

It belongs to the SAICAR synthetase family.

The enzyme catalyses 5-amino-1-(5-phospho-D-ribosyl)imidazole-4-carboxylate + L-aspartate + ATP = (2S)-2-[5-amino-1-(5-phospho-beta-D-ribosyl)imidazole-4-carboxamido]succinate + ADP + phosphate + 2 H(+). It participates in purine metabolism; IMP biosynthesis via de novo pathway; 5-amino-1-(5-phospho-D-ribosyl)imidazole-4-carboxamide from 5-amino-1-(5-phospho-D-ribosyl)imidazole-4-carboxylate: step 1/2. This Leptospira interrogans serogroup Icterohaemorrhagiae serovar copenhageni (strain Fiocruz L1-130) protein is Phosphoribosylaminoimidazole-succinocarboxamide synthase.